The following is a 173-amino-acid chain: MFRWYQAKLAKQPILTASVTSAVLFGSGDVLAQQVVDRKGLEKHDFARTGRMALYGGAIFGPAATTWFGFLQRNVVLKNSKATIVARVAADQCLFTPTHLTCFLTSMAIMEGSDPIEKWRNSFLPSYKANLTIWPLVQGVNFSIVPLEYRVLVVNLVSLGWNCLLSMINSGDK.

Transmembrane regions (helical) follow at residues 12–32, 52–72, 129–149, and 151–171; these read QPILTASVTSAVLFGSGDVLA, MALYGGAIFGPAATTWFGFLQ, ANLTIWPLVQGVNFSIVPLEY, and VLVVNLVSLGWNCLLSMINSG.

This sequence belongs to the peroxisomal membrane protein PXMP2/4 family.

Its subcellular location is the mitochondrion inner membrane. Its function is as follows. May be involved in cellular response to stress. Required to maintain mitochondrial DNA (mtDNA) integrity and stability. This is Protein sym1 (sym1) from Aspergillus oryzae (strain ATCC 42149 / RIB 40) (Yellow koji mold).